We begin with the raw amino-acid sequence, 191 residues long: Potassium-transporting ATPase KdpC subunit (191 aa).

The helical transmembrane segment at 10-30 threads the bilayer; it reads ITLVFCVFFSVFYILVLWLFA.

Belongs to the KdpC family. As to quaternary structure, the system is composed of three essential subunits: KdpA, KdpB and KdpC.

The protein localises to the cell inner membrane. Part of the high-affinity ATP-driven potassium transport (or Kdp) system, which catalyzes the hydrolysis of ATP coupled with the electrogenic transport of potassium into the cytoplasm. This subunit acts as a catalytic chaperone that increases the ATP-binding affinity of the ATP-hydrolyzing subunit KdpB by the formation of a transient KdpB/KdpC/ATP ternary complex. The protein is Potassium-transporting ATPase KdpC subunit of Bacteroides fragilis (strain YCH46).